The sequence spans 193 residues: Interleukin-18 (193 aa).

The propeptide occupies 1–36 (MAAEQVEDNCISFVEMKFINNTLYFVAENDEDLESD).

This sequence belongs to the IL-1 family. In terms of assembly, forms a ternary complex with ligand-binding receptor subunit IL18R1 and signaling receptor subunit IL18RAP at the plasma membrane. Mature IL18 first binds to IL18R1 forming a low affinity binary complex, which then interacts with IL18RAP to form a high affinity ternary complex that signals inside the cell. Interacts with cargo receptor TMED10; the interaction mediates the translocation from the cytoplasm into the ERGIC (endoplasmic reticulum-Golgi intermediate compartment) and thereby secretion. Post-translationally, the pro-IL-18 precursor is processed by CASP1, CASP4 or CASP5 to yield its mature, active form. The pro-IL-18 precursor features autoinhibitory interactions between the propeptide and the post-cleavage-site region, preventing recognition by the IL18R1 receptor. Processing by CASP1, CASP4 or CASP5 induces conformational changes to generate critical receptor-binding sites. The mature form is then secreted and released in the extracellular milieu by passing through the gasdermin-D (GSDMD) pore. In contrast, cleavage by CASP3 inactivates IL18.

It is found in the cytoplasm. It localises to the cytosol. Its subcellular location is the secreted. In terms of biological role, pro-inflammatory cytokine primarily involved in epithelial barrier repair, polarized T-helper 1 (Th1) cell and natural killer (NK) cell immune responses. Upon binding to IL18R1 and IL18RAP, forms a signaling ternary complex which activates NF-kappa-B, triggering synthesis of inflammatory mediators. Synergizes with IL12/interleukin-12 to induce IFNG synthesis from T-helper 1 (Th1) cells and natural killer (NK) cells. Involved in transduction of inflammation downstream of pyroptosis: its mature form is specifically released in the extracellular milieu by passing through the gasdermin-D (GSDMD) pore. The protein is Interleukin-18 (IL18) of Boselaphus tragocamelus (Nilgai).